We begin with the raw amino-acid sequence, 168 residues long: uncharacterized protein (168 aa).

A signal peptide spans 1-21 (MVYEVLAVVSGGLLGFGVTWA).

This is an uncharacterized protein from Archaeoglobus fulgidus (strain ATCC 49558 / DSM 4304 / JCM 9628 / NBRC 100126 / VC-16).